A 92-amino-acid polypeptide reads, in one-letter code: MVRSVWKGPFVEGSLLKKADAARASGRHDVIKIWSRRSTILPQFVGLTFGVYNGQKHVPVAINEEMVGHKFGEFSPTRTFHGHSGDKKSKKG.

This sequence belongs to the universal ribosomal protein uS19 family.

In terms of biological role, protein S19 forms a complex with S13 that binds strongly to the 16S ribosomal RNA. The polypeptide is Small ribosomal subunit protein uS19 (Rhodopseudomonas palustris (strain HaA2)).